The chain runs to 398 residues: MRGEFYQQLTNDLETARAEGLFKEERIITSAQQADITVADGSHVINFCANNYLGLANHPDLIAAAKAGMDSHGFGMASVRFICGTQDSHKELEQKLAAFLGMEDAILYSSCFDANGGLFETLLGAEDAIISDALNHASIIDGVRLCKAKRYRYANNDMQELEARLKEAREAGARHVLIATDGVFSMDGVIANLKGVCDLADKYDALVMVDDSHAVGFVGENGRGSHEYCDVMGRVDIITGTLGKALGGASGGYTAARKEVVEWLRQRSRPYLFSNSLAPAIVAASIKVLEMVEAGSELRDRLWANARQFREQMSAAGFTLAGADHAIIPVMLGDAVVAQKFARELQKEGIYVTGFFYPVVPKGQARIRTQMSAAHTPEQITRAVEAFTRIGKQLGVIA.

111–112 contacts pyridoxal 5'-phosphate; sequence CF. Histidine 136 provides a ligand contact to substrate. Residues serine 185, 210 to 213, 241 to 244, and 274 to 275 contribute to the pyridoxal 5'-phosphate site; these read DDSH, TLGK, and SN. Lysine 244 carries the post-translational modification N6-(pyridoxal phosphate)lysine. Residue arginine 368 coordinates substrate.

It belongs to the class-II pyridoxal-phosphate-dependent aminotransferase family. In terms of assembly, homodimer. The cofactor is pyridoxal 5'-phosphate.

The enzyme catalyses glycine + acetyl-CoA = (2S)-2-amino-3-oxobutanoate + CoA. Its pathway is amino-acid degradation; L-threonine degradation via oxydo-reductase pathway; glycine from L-threonine: step 2/2. Catalyzes the cleavage of 2-amino-3-ketobutyrate to glycine and acetyl-CoA. The protein is 2-amino-3-ketobutyrate coenzyme A ligase of Escherichia coli (strain K12).